Here is a 602-residue protein sequence, read N- to C-terminus: Fumarate reductase flavoprotein subunit (602 aa).

Residues 12–16 (GAGGA), 36–38 (ISK), 44–52 (SHTVAAEGG), 156–158 (HFV), 192–193 (AT), and Asp-212 each bind FAD. Residue His-45 is modified to Tele-8alpha-FAD histidine. Catalysis depends on residues His-233 and Arg-249. FAD is bound by residues 356-357 (HY), Glu-380, and 391-397 (RLGSNSL). The tract at residues 581-602 (YGGEADAADKAEAANKKEKANG) is disordered. Basic and acidic residues predominate over residues 587–602 (AADKAEAANKKEKANG).

It belongs to the FAD-dependent oxidoreductase 2 family. FRD/SDH subfamily. As to quaternary structure, part of an enzyme complex containing four subunits: a flavoprotein (FrdA), an iron-sulfur protein (FrdB), and two hydrophobic anchor proteins (FrdC and FrdD). Can be cross-linked to SdhE. Purified from membrane fractions associated with protoporphyrinogen IX dehydrogenase (hemG). It depends on FAD as a cofactor.

It localises to the cell inner membrane. It catalyses the reaction a quinone + succinate = fumarate + a quinol. The catalysed reaction is a menaquinone + succinate = a menaquinol + fumarate. With respect to regulation, inhibited by oxaloacetate, a substrate analog. In terms of biological role, two distinct, membrane-bound, FAD-containing enzymes are responsible for the catalysis of fumarate and succinate interconversion; fumarate reductase is used during anaerobic growth, and succinate dehydrogenase is used during aerobic growth. The QFR enzyme complex binds 2 quinones in or near the membrane; 1 near the [3Fe-4S] cluster (QP is proximal to the [3Fe-4S] cluster, on the cytoplasmic side of the membrane) while QD (the distal cluster) is on the other side of the membrane. It is not clear if both of the quinol-binding sites are functionally relevant. The protein is Fumarate reductase flavoprotein subunit (frdA) of Escherichia coli (strain K12).